A 447-amino-acid polypeptide reads, in one-letter code: Pyruvate kinase (447 aa).

Arg-33 contacts substrate. Residues Asn-35, Ser-37, and Asp-61 each coordinate K(+). Position 35–38 (35–38 (NMSH)) interacts with ATP. Arg-68 is an ATP binding site. Glu-203 contributes to the Mg(2+) binding site. Substrate contacts are provided by Gly-226, Asp-227, and Thr-259. Mg(2+) is bound at residue Asp-227.

The protein belongs to the pyruvate kinase family. Homotetramer. Mg(2+) serves as cofactor. The cofactor is K(+).

The enzyme catalyses pyruvate + ATP = phosphoenolpyruvate + ADP + H(+). It participates in carbohydrate degradation; glycolysis; pyruvate from D-glyceraldehyde 3-phosphate: step 5/5. The sequence is that of Pyruvate kinase from Methanocaldococcus jannaschii (strain ATCC 43067 / DSM 2661 / JAL-1 / JCM 10045 / NBRC 100440) (Methanococcus jannaschii).